The following is a 185-amino-acid chain: Crossover junction endodeoxyribonuclease RuvC (185 aa).

Residues aspartate 7, glutamate 68, and aspartate 141 contribute to the active site. Aspartate 7, glutamate 68, and aspartate 141 together coordinate Mg(2+).

The protein belongs to the RuvC family. Homodimer which binds Holliday junction (HJ) DNA. The HJ becomes 2-fold symmetrical on binding to RuvC with unstacked arms; it has a different conformation from HJ DNA in complex with RuvA. In the full resolvosome a probable DNA-RuvA(4)-RuvB(12)-RuvC(2) complex forms which resolves the HJ. Requires Mg(2+) as cofactor.

It localises to the cytoplasm. It carries out the reaction Endonucleolytic cleavage at a junction such as a reciprocal single-stranded crossover between two homologous DNA duplexes (Holliday junction).. The RuvA-RuvB-RuvC complex processes Holliday junction (HJ) DNA during genetic recombination and DNA repair. Endonuclease that resolves HJ intermediates. Cleaves cruciform DNA by making single-stranded nicks across the HJ at symmetrical positions within the homologous arms, yielding a 5'-phosphate and a 3'-hydroxyl group; requires a central core of homology in the junction. The consensus cleavage sequence is 5'-(A/T)TT(C/G)-3'. Cleavage occurs on the 3'-side of the TT dinucleotide at the point of strand exchange. HJ branch migration catalyzed by RuvA-RuvB allows RuvC to scan DNA until it finds its consensus sequence, where it cleaves and resolves the cruciform DNA. This chain is Crossover junction endodeoxyribonuclease RuvC, found in Mycolicibacterium smegmatis (strain ATCC 700084 / mc(2)155) (Mycobacterium smegmatis).